Here is a 120-residue protein sequence, read N- to C-terminus: UPF0231 protein NT01EI_0766 (120 aa).

Belongs to the UPF0231 family.

The sequence is that of UPF0231 protein NT01EI_0766 from Edwardsiella ictaluri (strain 93-146).